A 200-amino-acid polypeptide reads, in one-letter code: Ribonuclease HII (200 aa).

The region spanning methionine 1–isoleucine 200 is the RNase H type-2 domain. Residues aspartate 7, glutamate 8, and aspartate 99 each coordinate a divalent metal cation.

It belongs to the RNase HII family. Requires Mn(2+) as cofactor. The cofactor is Mg(2+).

It is found in the cytoplasm. The enzyme catalyses Endonucleolytic cleavage to 5'-phosphomonoester.. Functionally, endonuclease that specifically degrades the RNA of RNA-DNA hybrids. This is Ribonuclease HII from Nanoarchaeum equitans (strain Kin4-M).